Here is a 512-residue protein sequence, read N- to C-terminus: Serine--tRNA ligase, cytoplasmic (512 aa).

Met1 carries the post-translational modification N-acetylmethionine. Residues 9–61 (RVDKGGDPALIRETQEKRFKDPGLVDQLVKADSEWRRCRFRADNLNKLKNLCS) form an interaction with tRNA region. Ser241 carries the post-translational modification Phosphoserine. Thr271 and Arg302 together coordinate L-serine. ATP is bound by residues 302-304 (RQE) and 318-321 (VHQF). The residue at position 323 (Lys323) is an N6-acetyllysine. An L-serine-binding site is contributed by Glu325. 391 to 394 (ELVS) serves as a coordination point for ATP. Position 427 (Asn427) interacts with L-serine. The segment at 470-512 (FVKPAPIDQEPSKKQKKQHEGSKKKAKEVPLENQLQSMEVTEA) is disordered. The span at 479–499 (EPSKKQKKQHEGSKKKAKEVP) shows a compositional bias: basic and acidic residues. Positions 482 to 494 (KKQKKQHEGSKKK) match the Nuclear localization signal motif. Over residues 502-512 (NQLQSMEVTEA) the composition is skewed to polar residues. Ser506 carries the post-translational modification Phosphoserine.

It belongs to the class-II aminoacyl-tRNA synthetase family. Type-1 seryl-tRNA synthetase subfamily. As to quaternary structure, homodimer. The tRNA molecule may bind across the dimer. Interacts with SIRT2. Interacts with METTL6; interaction is required for the tRNA N(3)-methylcytidine methyltransferase activity of METTL6.

It localises to the cytoplasm. It is found in the nucleus. It catalyses the reaction tRNA(Ser) + L-serine + ATP = L-seryl-tRNA(Ser) + AMP + diphosphate + H(+). The enzyme catalyses tRNA(Sec) + L-serine + ATP = L-seryl-tRNA(Sec) + AMP + diphosphate + H(+). Its pathway is aminoacyl-tRNA biosynthesis; selenocysteinyl-tRNA(Sec) biosynthesis; L-seryl-tRNA(Sec) from L-serine and tRNA(Sec): step 1/1. Its function is as follows. Catalyzes the attachment of serine to tRNA(Ser) in a two-step reaction: serine is first activated by ATP to form Ser-AMP and then transferred to the acceptor end of tRNA(Ser). Is probably also able to aminoacylate tRNA(Sec) with serine, to form the misacylated tRNA L-seryl-tRNA(Sec), which will be further converted into selenocysteinyl-tRNA(Sec). In the nucleus, binds to the VEGFA core promoter and prevents MYC binding and transcriptional activation by MYC. Recruits SIRT2 to the VEGFA promoter, promoting deacetylation of histone H4 at 'Lys-16' (H4K16). Thereby, inhibits the production of VEGFA and sprouting angiogenesis mediated by VEGFA. This Mus musculus (Mouse) protein is Serine--tRNA ligase, cytoplasmic (Sars1).